The primary structure comprises 222 residues: 2-C-methyl-D-erythritol 4-phosphate cytidylyltransferase (222 aa).

It belongs to the IspD/TarI cytidylyltransferase family. IspD subfamily.

It catalyses the reaction 2-C-methyl-D-erythritol 4-phosphate + CTP + H(+) = 4-CDP-2-C-methyl-D-erythritol + diphosphate. The protein operates within isoprenoid biosynthesis; isopentenyl diphosphate biosynthesis via DXP pathway; isopentenyl diphosphate from 1-deoxy-D-xylulose 5-phosphate: step 2/6. Functionally, catalyzes the formation of 4-diphosphocytidyl-2-C-methyl-D-erythritol from CTP and 2-C-methyl-D-erythritol 4-phosphate (MEP). The protein is 2-C-methyl-D-erythritol 4-phosphate cytidylyltransferase of Thermotoga sp. (strain RQ2).